The following is a 629-amino-acid chain: Methionine--tRNA ligase (629 aa).

The 'HIGH' region motif lies at 10–20 (YYVNSEPHIGS). Zn(2+) is bound by residues Cys-125, Cys-128, Cys-146, and Cys-149. A 'KMSKS' region motif is present at residues 297 to 301 (KISKS). Lys-300 is a binding site for ATP. The 101-residue stretch at 529–629 (DFSKVDLRIA…GEITPGAKVS (101 aa)) folds into the tRNA-binding domain.

Belongs to the class-I aminoacyl-tRNA synthetase family. MetG type 2A subfamily. Homodimer. Zn(2+) is required as a cofactor.

The protein resides in the cytoplasm. It catalyses the reaction tRNA(Met) + L-methionine + ATP = L-methionyl-tRNA(Met) + AMP + diphosphate. Functionally, is required not only for elongation of protein synthesis but also for the initiation of all mRNA translation through initiator tRNA(fMet) aminoacylation. In Thermotoga maritima (strain ATCC 43589 / DSM 3109 / JCM 10099 / NBRC 100826 / MSB8), this protein is Methionine--tRNA ligase (metG).